The following is a 268-amino-acid chain: Enoyl-[acyl-carrier-protein] reductase [NADH] 2 (268 aa).

Residues Gly-14, 20 to 21 (SI), Gln-41, 65 to 66 (DV), and Ile-93 each bind NAD(+). Catalysis depends on proton acceptor residues Tyr-146 and Tyr-156. Residues Lys-163 and 192 to 196 (IRTLA) contribute to the NAD(+) site.

The protein belongs to the short-chain dehydrogenases/reductases (SDR) family. FabI subfamily.

The protein localises to the cell inner membrane. It catalyses the reaction a 2,3-saturated acyl-[ACP] + NAD(+) = a (2E)-enoyl-[ACP] + NADH + H(+). It functions in the pathway lipid metabolism; fatty acid biosynthesis. The polypeptide is Enoyl-[acyl-carrier-protein] reductase [NADH] 2 (fabI2) (Rhizobium meliloti (strain 1021) (Ensifer meliloti)).